We begin with the raw amino-acid sequence, 257 residues long: Very long chain fatty acid elongase F (257 aa).

Transmembrane regions (helical) follow at residues 10–30, 55–75, 98–118, 135–155, 158–178, 191–211, and 221–241; these read IPVVSNPWITMGTLIGYLLFV, IFQILYNGLILVLGVHFLFVL, LICTLYLVNKFVDLVETIFFV, FAMAFFGYLYYCFHGYGGVAF, CLLNTAVHVIMYAYYYLSSIS, ITIAQLVQFAIILLHCTITLA, and LTYGCGSLSAFFAVIFSQFYY.

The protein belongs to the ELO family. Highly expressed in females. Little or no expression detected in males.

Its subcellular location is the endoplasmic reticulum membrane. The catalysed reaction is a very-long-chain acyl-CoA + malonyl-CoA + H(+) = a very-long-chain 3-oxoacyl-CoA + CO2 + CoA. Its pathway is lipid metabolism; fatty acid biosynthesis. In terms of biological role, condensing enzyme that elongates saturated and monounsaturated very long chain fatty acids, to yield products up to 30 carbons in length. May also elongate diunsaturated fatty acids. Important for courtship behavior where it probably has a role in female pheromone biosynthesis. This is Very long chain fatty acid elongase F from Drosophila melanogaster (Fruit fly).